The following is a 116-amino-acid chain: Large ribosomal subunit protein uL18 (116 aa).

The protein belongs to the universal ribosomal protein uL18 family. Part of the 50S ribosomal subunit; part of the 5S rRNA/L5/L18/L25 subcomplex. Contacts the 5S and 23S rRNAs.

In terms of biological role, this is one of the proteins that bind and probably mediate the attachment of the 5S RNA into the large ribosomal subunit, where it forms part of the central protuberance. The sequence is that of Large ribosomal subunit protein uL18 from Chromohalobacter salexigens (strain ATCC BAA-138 / DSM 3043 / CIP 106854 / NCIMB 13768 / 1H11).